We begin with the raw amino-acid sequence, 339 residues long: Biotin synthase (339 aa).

The region spanning 55–282 is the Radical SAM core domain; sequence NAVQLSTLLS…KAVVRLSAGR (228 aa). 3 residues coordinate [4Fe-4S] cluster: cysteine 70, cysteine 74, and cysteine 77. [2Fe-2S] cluster is bound by residues cysteine 114, cysteine 145, cysteine 205, and arginine 277.

This sequence belongs to the radical SAM superfamily. Biotin synthase family. Homodimer. [4Fe-4S] cluster is required as a cofactor. Requires [2Fe-2S] cluster as cofactor.

It carries out the reaction (4R,5S)-dethiobiotin + (sulfur carrier)-SH + 2 reduced [2Fe-2S]-[ferredoxin] + 2 S-adenosyl-L-methionine = (sulfur carrier)-H + biotin + 2 5'-deoxyadenosine + 2 L-methionine + 2 oxidized [2Fe-2S]-[ferredoxin]. It participates in cofactor biosynthesis; biotin biosynthesis; biotin from 7,8-diaminononanoate: step 2/2. Its function is as follows. Catalyzes the conversion of dethiobiotin (DTB) to biotin by the insertion of a sulfur atom into dethiobiotin via a radical-based mechanism. The chain is Biotin synthase from Burkholderia ambifaria (strain MC40-6).